Consider the following 602-residue polypeptide: ATP-dependent RNA helicase DeaD (602 aa).

The Q motif motif lies at 6–34 (MTFSSFGLNSCIITALNDIGYVQPSPIQA). Positions 37-208 (IPYLIKGKDV…RRFMKNPKEI (172 aa)) constitute a Helicase ATP-binding domain. Residue 50-57 (AQTGSGKT) coordinates ATP. Residues 156–159 (DEAD) carry the DEAD box motif. In terms of domain architecture, Helicase C-terminal spans 231–378 (KTDALIRFLE…EVNLPKSDFL (148 aa)).

This sequence belongs to the DEAD box helicase family. DeaD/CsdA subfamily.

The protein localises to the cytoplasm. The catalysed reaction is ATP + H2O = ADP + phosphate + H(+). Its function is as follows. DEAD-box RNA helicase involved in various cellular processes at low temperature, including ribosome biogenesis, mRNA degradation and translation initiation. This is ATP-dependent RNA helicase DeaD from Buchnera aphidicola subsp. Baizongia pistaciae (strain Bp).